We begin with the raw amino-acid sequence, 377 residues long: Ribosomal RNA large subunit methyltransferase G (377 aa).

It belongs to the methyltransferase superfamily. RlmG family.

The protein localises to the cytoplasm. It catalyses the reaction guanosine(1835) in 23S rRNA + S-adenosyl-L-methionine = N(2)-methylguanosine(1835) in 23S rRNA + S-adenosyl-L-homocysteine + H(+). In terms of biological role, specifically methylates the guanine in position 1835 (m2G1835) of 23S rRNA. This Aeromonas salmonicida (strain A449) protein is Ribosomal RNA large subunit methyltransferase G.